Reading from the N-terminus, the 601-residue chain is Glutathione-regulated potassium-efflux system protein KefB (601 aa).

Transmembrane regions (helical) follow at residues 4–24 (ADLL…VPLA), 29–49 (IGAV…GLGF), 55–75 (EILH…GLEL), 87–107 (IFGV…GLLM), 111–131 (FLWQ…TAMA), 152–172 (VLLF…LLAG), 177–197 (HFDW…LIGG), 207–227 (FIAA…LVLS), 230–250 (LFMD…GVLL), 262–282 (AIDP…GMSL), 284–304 (LGVL…LVVI), 324–344 (MQFA…FSTA), and 356–376 (ALLL…MKGI). Residues 400–519 (KPQVIVVGFG…AGVTQFSRET (120 aa)) form the RCK N-terminal domain.

The protein belongs to the monovalent cation:proton antiporter 2 (CPA2) transporter (TC 2.A.37) family. KefB subfamily. Interacts with the regulatory subunit KefG.

The protein resides in the cell inner membrane. In terms of biological role, pore-forming subunit of a potassium efflux system that confers protection against electrophiles. Catalyzes K(+)/H(+) antiport. This Salmonella paratyphi B (strain ATCC BAA-1250 / SPB7) protein is Glutathione-regulated potassium-efflux system protein KefB.